The following is a 509-amino-acid chain: Maturase K (509 aa).

It belongs to the intron maturase 2 family. MatK subfamily.

Its subcellular location is the plastid. The protein localises to the chloroplast. Its function is as follows. Usually encoded in the trnK tRNA gene intron. Probably assists in splicing its own and other chloroplast group II introns. The polypeptide is Maturase K (Thujopsis dolabrata (Hiba arborvitae)).